The chain runs to 284 residues: Four and a half LIM domains protein 5 (284 aa).

The C4-type zinc-finger motif lies at 8–32; sequence CQYCTASLLGKKYVLKDDNLYCISC. 4 consecutive LIM zinc-binding domains span residues 39–100, 101–160, 161–220, and 221–283; these read NYCE…ECSS, KCFH…KEFA, HYCN…LYAK, and KCAA…ADTD.

Interacts with CREM (via the third LIM domain). Interacts (via second LIM domain) with SPAG8.

The protein localises to the nucleus. In terms of biological role, may be involved in the regulation of spermatogenesis. Stimulates CREM transcriptional activity in a phosphorylation-independent manner. The protein is Four and a half LIM domains protein 5 (Fhl5) of Rattus norvegicus (Rat).